A 588-amino-acid polypeptide reads, in one-letter code: Protein gamma response 1 (588 aa).

2 coiled-coil regions span residues Ala64 to Thr104 and Ser164 to Val281. Composition is skewed to basic and acidic residues over residues Lys377–Arg389, Asn465–Asp484, and Thr508–Arg525. Disordered stretches follow at residues Lys377 to Asn398 and Pro417 to Arg525.

In terms of tissue distribution, basal levels in mitotically dividing cells (meristems), and high levels in endoreduplicating cells (stipules, trichomes) (at protein level).

Its subcellular location is the nucleus. Seems to mediate cell cycle arrest before mitosis in response to DNA damage. Is probably also involved in the transition from mitosis to endoreduplication. The chain is Protein gamma response 1 (GR1) from Arabidopsis thaliana (Mouse-ear cress).